The sequence spans 173 residues: FMN reductase (NADH) RutF 2 (173 aa).

The protein belongs to the non-flavoprotein flavin reductase family. RutF subfamily.

It catalyses the reaction FMNH2 + NAD(+) = FMN + NADH + 2 H(+). In terms of biological role, catalyzes the reduction of FMN to FMNH2 which is used to reduce pyrimidine by RutA via the Rut pathway. This chain is FMN reductase (NADH) RutF 2, found in Rhizobium rhizogenes (strain K84 / ATCC BAA-868) (Agrobacterium radiobacter).